The sequence spans 1381 residues: Hepatocyte growth factor receptor (1381 aa).

Residues 1-24 (MKAPAVLVPGILVLLFTLVQRSNG) form the signal peptide. Topologically, residues 25–932 (ECKEALAKSE…VIVQPDQNFT (908 aa)) are extracellular. The 489-residue stretch at 27–515 (KEALAKSEMN…TGKKITKIPL (489 aa)) folds into the Sema domain. A glycan (N-linked (GlcNAc...) asparagine) is linked at asparagine 45. Disulfide bonds link cysteine 95-cysteine 101, cysteine 98-cysteine 160, cysteine 133-cysteine 141, and cysteine 172-cysteine 175. Asparagine 106 carries N-linked (GlcNAc...) asparagine glycosylation. An N-linked (GlcNAc...) asparagine glycan is attached at asparagine 149. Residue asparagine 202 is glycosylated (N-linked (GlcNAc...) asparagine). 2 disulfides stabilise this stretch: cysteine 298–cysteine 363 and cysteine 385–cysteine 397. Residues asparagine 399 and asparagine 405 are each glycosylated (N-linked (GlcNAc...) asparagine). Intrachain disulfides connect cysteine 520–cysteine 538, cysteine 526–cysteine 561, cysteine 529–cysteine 545, and cysteine 541–cysteine 551. 3 consecutive IPT/TIG domains span residues 563-655 (PAIY…FSYV), 657-739 (PIIT…FSYR), and 742-836 (PIVY…LIYV). O-linked (Man) threonine glycosylation is present at threonine 582. 2 N-linked (GlcNAc...) asparagine glycosylation sites follow: asparagine 607 and asparagine 635. 2 O-linked (Man) threonine glycosylation sites follow: threonine 676 and threonine 761. N-linked (GlcNAc...) asparagine glycans are attached at residues asparagine 785, asparagine 879, and asparagine 930. The chain crosses the membrane as a helical span at residues 933–955 (GLIAGVVSISIALLLLLGLFLWL). The Cytoplasmic portion of the chain corresponds to 956–1381 (KKRKQIKDLG…EDNADDEVDT (426 aa)). Serine 966 carries the phosphoserine modification. Threonine 977 carries the post-translational modification Phosphothreonine. Phosphoserine occurs at positions 990, 997, and 1000. Residue tyrosine 1003 is modified to Phosphotyrosine. A Protein kinase domain is found at 1078–1345 (VHFNEVIGRG…RISAIFSTFI (268 aa)). Residues 1084–1092 (IGRGHFGCV) and lysine 1110 each bind ATP. Aspartate 1204 serves as the catalytic Proton acceptor. Residues 1212–1381 (LDEKFTVKVA…EDNADDEVDT (170 aa)) are interaction with RANBP9. Tyrosine 1230 bears the Phosphotyrosine mark. A phosphotyrosine; by autocatalysis mark is found at tyrosine 1234 and tyrosine 1235. Threonine 1289 carries the phosphothreonine modification. The interaction with MUC20 stretch occupies residues 1320–1359 (WHPKAEMRPSFSELVSRISAIFSTFIGEHYVHVNATYVNV). Phosphotyrosine; by autocatalysis occurs at positions 1349 and 1356. Tyrosine 1365 bears the Phosphotyrosine mark.

It belongs to the protein kinase superfamily. Tyr protein kinase family. As to quaternary structure, heterodimer made of an alpha chain (50 kDa) and a beta chain (145 kDa) which are disulfide linked. Binds PLXNB1. Interacts when phosphorylated with downstream effectors including STAT3, PIK3R1, SRC, PCLG1, GRB2 and GAB1. Interacts with SPSB1, SPSB2 and SPSB4. Interacts with INPP5D/SHIP1. When phosphorylated at Tyr-1356, interacts with INPPL1/SHIP2. Interacts with RANBP9 and RANBP10, as well as SPSB1, SPSB2, SPSB3 and SPSB4. SPSB1 binding occurs in the presence and in the absence of HGF, however HGF treatment has a positive effect on this interaction. Interacts with MUC20; prevents interaction with GRB2 and suppresses hepatocyte growth factor-induced cell proliferation. Interacts with GRB10. Interacts with PTPN1 and PTPN2. Interacts with HSP90AA1 and HSP90AB1; the interaction suppresses MET kinase activity. Interacts with tensin TNS3. Interacts (when phosphorylated) with tensin TNS4 (via SH2 domain); the interaction increases MET protein stability by inhibiting MET endocytosis and subsequent lysosomal degradation. Post-translationally, autophosphorylated in response to ligand binding on Tyr-1234 and Tyr-1235 in the kinase domain leading to further phosphorylation of Tyr-1349 and Tyr-1356 in the C-terminal multifunctional docking site. Dephosphorylated by PTPRJ at Tyr-1349 and Tyr-1365. Dephosphorylated by PTPN1 and PTPN2. Ubiquitinated. Ubiquitination by CBL regulates the receptor stability and activity through proteasomal degradation. In terms of processing, O-mannosylation of IPT/TIG domains by TMEM260 is required for protein maturation. O-mannosylated residues are composed of single mannose glycans that are not elongated or modified.

It is found in the membrane. The enzyme catalyses L-tyrosyl-[protein] + ATP = O-phospho-L-tyrosyl-[protein] + ADP + H(+). In its inactive state, the C-terminal tail interacts with the catalytic domain and inhibits the kinase activity. Upon ligand binding, the C-terminal tail is displaced and becomes phosphorylated, thus increasing the kinase activity. In terms of biological role, receptor tyrosine kinase that transduces signals from the extracellular matrix into the cytoplasm by binding to hepatocyte growth factor/HGF ligand. Regulates many physiological processes including proliferation, scattering, morphogenesis and survival. Ligand binding at the cell surface induces autophosphorylation of MET on its intracellular domain that provides docking sites for downstream signaling molecules. Following activation by ligand, interacts with the PI3-kinase subunit PIK3R1, PLCG1, SRC, GRB2, STAT3 or the adapter GAB1. Recruitment of these downstream effectors by MET leads to the activation of several signaling cascades including the RAS-ERK, PI3 kinase-AKT, or PLCgamma-PKC. The RAS-ERK activation is associated with the morphogenetic effects while PI3K/AKT coordinates prosurvival effects. During embryonic development, MET signaling plays a role in gastrulation, development and migration of muscles and neuronal precursors, angiogenesis and kidney formation. In adults, participates in wound healing as well as organ regeneration and tissue remodeling. Also promotes differentiation and proliferation of hematopoietic cells. This Papio anubis (Olive baboon) protein is Hepatocyte growth factor receptor (MET).